Reading from the N-terminus, the 197-residue chain is Imidazoleglycerol-phosphate dehydratase (197 aa).

This sequence belongs to the imidazoleglycerol-phosphate dehydratase family.

It localises to the cytoplasm. The enzyme catalyses D-erythro-1-(imidazol-4-yl)glycerol 3-phosphate = 3-(imidazol-4-yl)-2-oxopropyl phosphate + H2O. It functions in the pathway amino-acid biosynthesis; L-histidine biosynthesis; L-histidine from 5-phospho-alpha-D-ribose 1-diphosphate: step 6/9. This Saccharophagus degradans (strain 2-40 / ATCC 43961 / DSM 17024) protein is Imidazoleglycerol-phosphate dehydratase.